The primary structure comprises 445 residues: MSKNSSRDSSPEEVSPDTETPSTTTAPKTFRELGVIDSLCEACEELGYTAPTPIQERCIPIALEGRDLIGLAETGSGKTAAFVLPMLQALMDKPQQFHSLILAPTRELAQQIAHTVEALGARISVRCTLLIGGMDMISQAIALGKKPHVIVATPGRLLDHLENTKGFSLRTLKYLVLDEADRLLDLDFGPILDKLLRLLPKRKTYLFSATMSSKVESLQRASLSDPVRVSVSTKNQTASKLLQSYLFIPHKFKDFYLVYLLNERAGQMGIIFTRTVHETQRLSIMLRNLGFPAIPIHGQLSQSARLASLNKFRARSRNLLIATDVAARGLDIPAVDYVLNYDLPQDSKTYIHRVGRTARAGKSGIAFSFVTQYEVELWLRIEDALGKKVEEYKPEKDEVMIFAERVNDAQRVAALTMRDMQDKDNKGRGPRNRKRTRDDLDQDDG.

Over residues 1–10 (MSKNSSRDSS) the composition is skewed to basic and acidic residues. Positions 1–28 (MSKNSSRDSSPEEVSPDTETPSTTTAPK) are disordered. Residues 17–28 (DTETPSTTTAPK) are compositionally biased toward low complexity. The short motif at 28–56 (KTFRELGVIDSLCEACEELGYTAPTPIQE) is the Q motif element. The region spanning 59–229 (IPIALEGRDL…RASLSDPVRV (171 aa)) is the Helicase ATP-binding domain. 72 to 79 (AETGSGKT) serves as a coordination point for ATP. Positions 178 to 181 (DEAD) match the DEAD box motif. The Helicase C-terminal domain maps to 240–400 (KLLQSYLFIP…EYKPEKDEVM (161 aa)). The segment at 415 to 445 (LTMRDMQDKDNKGRGPRNRKRTRDDLDQDDG) is disordered.

This sequence belongs to the DEAD box helicase family. DDX47/RRP3 subfamily. In terms of assembly, interacts with the SSU processome.

Its subcellular location is the nucleus. The enzyme catalyses ATP + H2O = ADP + phosphate + H(+). Its function is as follows. ATP-dependent rRNA helicase required for pre-ribosomal RNA processing. Involved in the maturation of the 35S-pre-rRNA and to its cleavage to mature 18S rRNA. The chain is ATP-dependent rRNA helicase rrp3 from Aspergillus terreus (strain NIH 2624 / FGSC A1156).